A 257-amino-acid chain; its full sequence is Inositol diphosphatase DSP2 (257 aa).

Residues 66–251 (NFSMVDNGIF…VSGLKHTPMS (186 aa)) form the Tyrosine-protein phosphatase domain. Residues Ile168 and Lys172 each contribute to the 1D-myo-inositol hexakisphosphate site. The Phosphocysteine intermediate role is filled by Cys192.

The protein belongs to the protein-tyrosine phosphatase family. Atypical dual-specificity phosphatase Siw14-like subfamily. As to expression, expressed in roots, leaves, stems, flowers and siliques.

The catalysed reaction is 5-diphospho-1D-myo-inositol 1,2,3,4,6-pentakisphosphate + H2O = 1D-myo-inositol hexakisphosphate + phosphate + H(+). The enzyme catalyses 1,5-bis(diphospho)-1D-myo-inositol 2,3,4,6-tetrakisphosphate + H2O = 1-diphospho-1D-myo-inositol 2,3,4,5,6-pentakisphosphate + phosphate + 2 H(+). It catalyses the reaction 3,5-bis(diphospho)-1D-myo-inositol 1,2,4,6-tetrakisphosphate + H2O = 3-diphospho-1D-myo-inositol 1,2,4,5,6-pentakisphosphate + phosphate + 2 H(+). It carries out the reaction 6-diphospho-1D-myo-inositol pentakisphosphate + H2O = 1D-myo-inositol hexakisphosphate + phosphate + H(+). Functionally, cleaves the beta-phosphate at the 5-position of soluble inositol pyrophosphates. Has highest activity on 5-diphosphoinositol 1,2,3,4,6-pentakisphosphate (5-InsP(7)), 1,5-bis-diphosphoinositol 2,3,4,6-tetrakisphosphate (1,5-InsP(8)) and 3,5-InsP(8). Possesses phosphotyrosine phosphatase activity in vitro. Dephosphorylates the phosphoinositides PI(3,5)P2. Hydrolyzes para-nitrophenyl phosphate and O-methylfluorescein phosphate in vitro. This is Inositol diphosphatase DSP2 from Arabidopsis thaliana (Mouse-ear cress).